A 271-amino-acid polypeptide reads, in one-letter code: MSALLGLPPEVQDTCISLGLMLLVVLFMGLARVIARQQLHRPMVHAFVLEFLATFQLCYCTHELQLLSEQDSGHPTWTLTLIYFFSLVHGLTLVGTASNPCGVMMQMILGGMSPEMGAVRLMAQLVSALCSRYCISALWSLSLTKYHFDERILACRNPINTDISKAIIIEAICSFIFHSALLHFQEVRTKLRIHVLAALITFLAYAGGSLTGALFNPALALSLHFPCFDESFYKFFVVYWVAPSLGVLLMILMFSFFLPWLHNNQLSNKKE.

Residues Met-1–Thr-14 are Cytoplasmic-facing. The chain crosses the membrane as a helical span at residues Cys-15–Ala-35. Residues Arg-36–Arg-41 lie on the Lumenal side of the membrane. The chain crosses the membrane as a helical span at residues Pro-42–His-62. Topologically, residues Glu-63–Thr-76 are cytoplasmic. A helical transmembrane segment spans residues Trp-77–Ala-97. At Ser-98–Ala-166 the chain is on the lumenal side. The NPC signature appears at Asn-99–Cys-101. Residues Ile-167 to Val-187 form a helical membrane-spanning segment. The Cytoplasmic portion of the chain corresponds to Arg-188 to His-194. A helical transmembrane segment spans residues Val-195–Phe-215. An NPA motif is present at residues Asn-216 to Ala-218. Topologically, residues Asn-216–Lys-234 are lumenal. A helical membrane pass occupies residues Phe-235–Ser-255. Residues Phe-256–Glu-271 lie on the Cytoplasmic side of the membrane.

It belongs to the MIP/aquaporin (TC 1.A.8) family. AQP11/AQP12 subfamily. In terms of assembly, homodimer; disulfide-linked. Homotetramer. Can also form homomultimer. Not glycosylated. As to expression, expressed in retina specifically at retinal Mueller glial cells. Expressed in adult testis, in the elongated spermatids (ES) and in residual bodies inside Sertoli cells.

Its subcellular location is the endoplasmic reticulum membrane. It localises to the cytoplasmic vesicle membrane. The protein resides in the cell membrane. The enzyme catalyses H2O(in) = H2O(out). The catalysed reaction is glycerol(in) = glycerol(out). It catalyses the reaction H2O2(out) = H2O2(in). Functionally, channel protein that facilitates the transport of water, glycerol and hydrogen peroxide across membrane of cell or organelles guaranteeing intracellular homeostasis in several organes like liver, kidney and brain. In situation of stress, participates in endoplasmic reticulum (ER) homeostasis by regulating redox homeostasis through the transport of hydrogen peroxide across the endoplasmic reticulum membrane thereby regulating the oxidative stress through the NADPH oxidase 2 pathway. Plays a role by maintaining an environment suitable for translation or protein foldings in the ER lumen namely by participating in the PKD1 glycosylation processing resulting in regulation of PKD1 membrane trafficking thereby preventing the accumulation of unfolding protein in ER. Plays a role in the proximal tubule function by regulating its endosomal acidification. May play a role in postnatal kidney development. This Rattus norvegicus (Rat) protein is Aquaporin-11.